An 827-amino-acid chain; its full sequence is Putative transcriptional regulatory protein C16G5.16 (827 aa).

The zn(2)-C6 fungal-type DNA-binding region spans 16-42 (CDECHRRKIKCDQRRPCSNCIAYNYEC). 3 disordered regions span residues 80 to 114 (LKLP…SSQD), 158 to 193 (TVPN…HKKP), and 794 to 827 (QPPS…KRTE). Positions 102-112 (KRSDSSKRSSS) are enriched in basic and acidic residues. S112 carries the phosphoserine modification. 2 stretches are compositionally biased toward low complexity: residues 159–179 (VPNP…LSFP) and 811–827 (SNNS…KRTE).

Belongs to the ASG1 family.

The protein localises to the cytoplasm. Its subcellular location is the nucleus. The protein is Putative transcriptional regulatory protein C16G5.16 of Schizosaccharomyces pombe (strain 972 / ATCC 24843) (Fission yeast).